We begin with the raw amino-acid sequence, 348 residues long: Chaperone protein DnaJ (348 aa).

Residues 3 to 65 (DLYGILGVDH…EQRQRYDRHV (63 aa)) enclose the J domain. Residues 109–191 (GGSQVVKIDS…CYGNGSRSAP (83 aa)) form a CR-type zinc finger. Positions 122, 125, 139, 142, 165, 168, 179, and 182 each coordinate Zn(2+). CXXCXGXG motif repeat units lie at residues 122-129 (CDVCNGTR), 139-146 (CFDCNGSG), 165-172 (CSKCRGNG), and 179-186 (CRRCYGNG).

Belongs to the DnaJ family. As to quaternary structure, homodimer. Requires Zn(2+) as cofactor.

The protein localises to the cytoplasm. In terms of biological role, participates actively in the response to hyperosmotic and heat shock by preventing the aggregation of stress-denatured proteins and by disaggregating proteins, also in an autonomous, DnaK-independent fashion. Unfolded proteins bind initially to DnaJ; upon interaction with the DnaJ-bound protein, DnaK hydrolyzes its bound ATP, resulting in the formation of a stable complex. GrpE releases ADP from DnaK; ATP binding to DnaK triggers the release of the substrate protein, thus completing the reaction cycle. Several rounds of ATP-dependent interactions between DnaJ, DnaK and GrpE are required for fully efficient folding. Also involved, together with DnaK and GrpE, in the DNA replication of plasmids through activation of initiation proteins. The protein is Chaperone protein DnaJ of Tropheryma whipplei (strain Twist) (Whipple's bacillus).